Here is a 719-residue protein sequence, read N- to C-terminus: ATP-dependent RNA helicase p62 (719 aa).

The interval 94–234 is disordered; the sequence is AQSQRAFRDS…GSQDLPMRPV (141 aa). Basic and acidic residues-rich tracts occupy residues 99-108 and 137-171; these read AFRDSSKPDS and EEIK…DRRG. Over residues 172-188 the composition is skewed to gly residues; it reads GGGGGNRFGGGGGGGDY. The span at 194–205 shows a compositional bias: basic and acidic residues; it reads GRVEKRRDDRGG. Positions 206-226 are enriched in gly residues; it reads GNRFGGGGGFGDRRGGGGGGS. The Q motif motif lies at 281–309; that stretch reads QDFSEVHLPDYVMKEIRRQGYKAPTAIQA. A Helicase ATP-binding domain is found at 312-487; it reads WPIAMSGSNF…EDFLGNYIQI (176 aa). Residue 325–332 participates in ATP binding; it reads AKTGSGKT. The DEAD box signature appears at 435–438; sequence DEAD. In terms of domain architecture, Helicase C-terminal spans 519–664; that stretch reads LLSDIYDTSE…EINPALENLA (146 aa). Residues 689-719 form a disordered region; that stretch reads GGGFKKGSLSNGRGFGGGGGGGGEGRHSRFD. Residues 701 to 711 show a composition bias toward gly residues; it reads RGFGGGGGGGG.

It belongs to the DEAD box helicase family. DDX5/DBP2 subfamily. As to quaternary structure, interacts with Fmr1 to form the RNA-induced silencing complex (RISC), a ribonucleoprotein (RNP) complex involved in translation regulation, other components of the complex are RpL5, RpL11, AGO2 and Dcr-1.

It is found in the nucleus. Its subcellular location is the nucleolus. The protein localises to the cytoplasm. The protein resides in the cytosol. It carries out the reaction ATP + H2O = ADP + phosphate + H(+). In terms of biological role, as an RNA helicase, unwinds RNA and alters RNA structures through ATP binding and hydrolysis. Involved in multiple cellular processes, including pre-mRNA splicing, alternative splicing, rRNA processing and miRNA processing, as well as transcription regulation. Plays a role in innate immunity. Specifically restricts bunyavirus infection, including Rift Valley fever virus (RVFV) or La Crosse virus (LACV), but not vesicular stomatitis virus (VSV), in an interferon- and DROSHA-independent manner. The chain is ATP-dependent RNA helicase p62 (Rm62) from Drosophila melanogaster (Fruit fly).